The primary structure comprises 743 residues: Glycerol-3-phosphate O-acyltransferase 2 (743 aa).

Residues 1-34 (MSAPAADHNAAKPIPHVPQASRRYKNSYNGFVYN) are Lumenal-facing. Residues 35–55 (IHTWLYDVSVFLFNILFTIFF) traverse the membrane as a helical segment. Over 56-442 (REIKVRGAYN…TKLEALRCFV (387 aa)) the chain is Cytoplasmic. A helical transmembrane segment spans residues 443–457 (TLIVRLIKFSVFAIL). A topological domain (lumenal) is located at residue S458. The chain crosses the membrane as a helical span at residues 459 to 473 (LPGSILFTPIFIICR). Residues 474–501 (VYSEKKAKEGLKKSLVKIKGTDLLATWK) are Cytoplasmic-facing. Residues 502–522 (LIVALILAPILYVTYSILLII) form a helical membrane-spanning segment. Residues 523–531 (LARKQHYCR) are Lumenal-facing. The chain crosses the membrane as a helical span at residues 532–552 (IWVPSNNAFIQFVYFYALLVF). The Cytoplasmic portion of the chain corresponds to 553-743 (TTYSSLKTGE…RQKREHEKKE (191 aa)). Phosphoserine occurs at positions 632, 637, 647, 651, 654, 657, 664, 668, and 671. T673 is subject to Phosphothreonine. The segment at 682–743 (KQGQWKSEGE…RQKREHEKKE (62 aa)) is disordered. S688 bears the Phosphoserine mark. The span at 691-700 (ETSEDEDEFD) shows a compositional bias: acidic residues. T692 carries the phosphothreonine modification. The residue at position 693 (S693) is a Phosphoserine.

It belongs to the GPAT/DAPAT family. In terms of processing, phosphorylated at a conserved motif involving Ser-664, Ser-668 and Ser-671. This phosphorylation plays a critical role for efficient TAG mobilization. Phosphorylation deficiency at this motif increases the enzyme activity and consequently induces de novo formation of phosphatidic acid.

The protein resides in the lipid droplet. The protein localises to the endoplasmic reticulum membrane. The enzyme catalyses sn-glycerol 3-phosphate + an acyl-CoA = a 1-acyl-sn-glycero-3-phosphate + CoA. It carries out the reaction dihydroxyacetone phosphate + an acyl-CoA = a 1-acylglycerone 3-phosphate + CoA. It catalyses the reaction sn-glycerol 3-phosphate + hexadecanoyl-CoA = 1-hexadecanoyl-sn-glycero-3-phosphate + CoA. The catalysed reaction is (9Z)-hexadecenoyl-CoA + sn-glycerol 3-phosphate = 1-(9Z-hexadecenoyl)-sn-glycero-3-phosphate + CoA. The enzyme catalyses sn-glycerol 3-phosphate + octadecanoyl-CoA = 1-octadecanoyl-sn-glycero-3-phosphate + CoA. It carries out the reaction sn-glycerol 3-phosphate + (9Z)-octadecenoyl-CoA = 1-(9Z-octadecenoyl)-sn-glycero-3-phosphate + CoA. It participates in phospholipid metabolism; CDP-diacylglycerol biosynthesis; CDP-diacylglycerol from sn-glycerol 3-phosphate: step 1/3. In terms of biological role, dual substrate-specific glycerol-3-phosphate/dihydroxyacetone phosphate sn-1 acyltransferase, catalyzing the first and committed reaction in the de novo synthesis of glycerophospholipids and triacylglycerols (TAGs). Can use both Gly-3-P and dihydroxyacetone phosphate with similar efficiencies and has a broad fatty acyl-CoA specificity profile. Transfers a fatty acid from fatty acyl-CoA to the sn-1 position of glycerol-3-phosphate to produce lysophosphatidic acid (LysoPA). These lipids not only are precursors of glycerolipids, but also are dynamic components of signal transduction systems that control cell physiology. The protein is Glycerol-3-phosphate O-acyltransferase 2 (GPT2) of Saccharomyces cerevisiae (strain ATCC 204508 / S288c) (Baker's yeast).